A 283-amino-acid polypeptide reads, in one-letter code: MQTDSLSPSPNPVSPVPLNNPTSAPRYGTVIPNRIFVGGIDFKTNESDLRKFFSQYGSVKEVKIVNDRAGVSKGYGFVTFETQEDAQKILQEAEKLNYKDKKLNIGPAIRKQQVGIPRSSIMPAAGTMYLTTSTGYPYTYHNGVAYFHTPEVTSVPPPWPSRSVCSSPVMVAQPIYQQPAYHYQATAQYLPGQWQWSVPQPPASSAPFLYLQPSEVIYQPVEIAQDGGCVPPPLSLMETSVPEPYSDHGVQATYHQVYAPSAISMPAPVMQPEPIKTVWSIHY.

Residues 1–25 are disordered; sequence MQTDSLSPSPNPVSPVPLNNPTSAP. Positions 33–110 constitute an RRM domain; sequence NRIFVGGIDF…KKLNIGPAIR (78 aa). In terms of domain architecture, DAZ spans 160-184; the sequence is PSRSVCSSPVMVAQPIYQQPAYHYQ.

The protein belongs to the RRM DAZ family. As to quaternary structure, interacts with DAZ1 and DAZL.

The protein localises to the cytoplasm. Functionally, probable RNA-binding protein, which may be required during spermatogenesis. May act by binding to the 3'-UTR of mRNAs and regulating their translation. The protein is Protein boule-like (BOLL) of Macaca fascicularis (Crab-eating macaque).